We begin with the raw amino-acid sequence, 441 residues long: Serine/threonine-protein phosphatase 2A activator 1 (441 aa).

Composition is skewed to polar residues over residues 66-75 (NIPPSNTTHS) and 421-432 (QRQDDLNSTTYR). Disordered stretches follow at residues 66–100 (NIPP…SSNQ) and 421–441 (QRQD…LGRN).

It belongs to the PTPA-type PPIase family.

It localises to the cytoplasm. Its subcellular location is the nucleus. The enzyme catalyses [protein]-peptidylproline (omega=180) = [protein]-peptidylproline (omega=0). Functionally, PPIases accelerate the folding of proteins. It catalyzes the cis-trans isomerization of proline imidic peptide bonds in oligopeptides. Acts as a regulatory subunit for PP2A-like phosphatases modulating their activity or substrate specificity, probably by inducing a conformational change in the catalytic subunit, a direct target of the PPIase. Can reactivate inactive phosphatase PP2A-phosphatase methylesterase complexes (PP2Ai) in presence of ATP and Mg(2+) by dissociating the inactive form from the complex. This is Serine/threonine-protein phosphatase 2A activator 1 (RRD1) from Debaryomyces hansenii (strain ATCC 36239 / CBS 767 / BCRC 21394 / JCM 1990 / NBRC 0083 / IGC 2968) (Yeast).